A 92-amino-acid chain; its full sequence is UPF0223 protein SUB0967 (92 aa).

It belongs to the UPF0223 family.

In Streptococcus uberis (strain ATCC BAA-854 / 0140J), this protein is UPF0223 protein SUB0967.